The primary structure comprises 227 residues: Cytochrome c oxidase subunit 2 (227 aa).

The Mitochondrial intermembrane segment spans residues 1–14 (MAYPFQLGLQDATS). A helical membrane pass occupies residues 15 to 45 (PIMEELTNFHDHTLMIVFLISTLVLYIISLM). The Mitochondrial matrix portion of the chain corresponds to 46–59 (LTTKLTHTSTMDAQ). The helical transmembrane segment at 60-87 (EVETIWTILPAVILILIALPSLRILYMM) threads the bilayer. The Mitochondrial intermembrane segment spans residues 88 to 227 (DEINNPVLTV…YFENWSASMI (140 aa)). Cu cation contacts are provided by His-161, Cys-196, Glu-198, Cys-200, His-204, and Met-207. Glu-198 is a Mg(2+) binding site. At Tyr-218 the chain carries Phosphotyrosine.

The protein belongs to the cytochrome c oxidase subunit 2 family. In terms of assembly, component of the cytochrome c oxidase (complex IV, CIV), a multisubunit enzyme composed of 14 subunits. The complex is composed of a catalytic core of 3 subunits MT-CO1, MT-CO2 and MT-CO3, encoded in the mitochondrial DNA, and 11 supernumerary subunits COX4I, COX5A, COX5B, COX6A, COX6B, COX6C, COX7A, COX7B, COX7C, COX8 and NDUFA4, which are encoded in the nuclear genome. The complex exists as a monomer or a dimer and forms supercomplexes (SCs) in the inner mitochondrial membrane with NADH-ubiquinone oxidoreductase (complex I, CI) and ubiquinol-cytochrome c oxidoreductase (cytochrome b-c1 complex, complex III, CIII), resulting in different assemblies (supercomplex SCI(1)III(2)IV(1) and megacomplex MCI(2)III(2)IV(2)). Found in a complex with TMEM177, COA6, COX18, COX20, SCO1 and SCO2. Interacts with TMEM177 in a COX20-dependent manner. Interacts with COX20. Interacts with COX16. It depends on Cu cation as a cofactor.

The protein localises to the mitochondrion inner membrane. The catalysed reaction is 4 Fe(II)-[cytochrome c] + O2 + 8 H(+)(in) = 4 Fe(III)-[cytochrome c] + 2 H2O + 4 H(+)(out). Component of the cytochrome c oxidase, the last enzyme in the mitochondrial electron transport chain which drives oxidative phosphorylation. The respiratory chain contains 3 multisubunit complexes succinate dehydrogenase (complex II, CII), ubiquinol-cytochrome c oxidoreductase (cytochrome b-c1 complex, complex III, CIII) and cytochrome c oxidase (complex IV, CIV), that cooperate to transfer electrons derived from NADH and succinate to molecular oxygen, creating an electrochemical gradient over the inner membrane that drives transmembrane transport and the ATP synthase. Cytochrome c oxidase is the component of the respiratory chain that catalyzes the reduction of oxygen to water. Electrons originating from reduced cytochrome c in the intermembrane space (IMS) are transferred via the dinuclear copper A center (CU(A)) of subunit 2 and heme A of subunit 1 to the active site in subunit 1, a binuclear center (BNC) formed by heme A3 and copper B (CU(B)). The BNC reduces molecular oxygen to 2 water molecules using 4 electrons from cytochrome c in the IMS and 4 protons from the mitochondrial matrix. The polypeptide is Cytochrome c oxidase subunit 2 (MT-CO2) (Leopoldamys sabanus (Long-tailed giant rat)).